Consider the following 1907-residue polypeptide: Probable RNA-directed RNA polymerase (1907 aa).

Positions 42–61 are disordered; it reads NTHNDHEETHGESPEVPKAS. Over residues 44–56 the composition is skewed to basic and acidic residues; that stretch reads HNDHEETHGESPE.

It belongs to the totiviridae RNA-directed RNA polymerase family.

The enzyme catalyses RNA(n) + a ribonucleoside 5'-triphosphate = RNA(n+1) + diphosphate. In terms of biological role, RNA-dependent RNA polymerase which replicates the viral genome. Catalyzes the transcription of fully conservative plus-strand genomic RNAs that are extruded from the virion into the cytoplasm where they function as mRNAs for translation of viral proteins and also as substrates for encapsidation to form new virions. Once encapsidated, the positive strand is converted to dsRNA by the RNA-directed RNA polymerase. Displays ssRNA-binding activity. This chain is Probable RNA-directed RNA polymerase (gag-pol), found in Giardia intestinalis (Giardia lamblia).